The chain runs to 197 residues: Large ribosomal subunit protein bL25 (197 aa).

This sequence belongs to the bacterial ribosomal protein bL25 family. CTC subfamily. Part of the 50S ribosomal subunit; part of the 5S rRNA/L5/L18/L25 subcomplex. Contacts the 5S rRNA. Binds to the 5S rRNA independently of L5 and L18.

Its function is as follows. This is one of the proteins that binds to the 5S RNA in the ribosome where it forms part of the central protuberance. The protein is Large ribosomal subunit protein bL25 of Citrifermentans bemidjiense (strain ATCC BAA-1014 / DSM 16622 / JCM 12645 / Bem) (Geobacter bemidjiensis).